Here is a 104-residue protein sequence, read N- to C-terminus: Ig lambda-2 chain C region (104 aa).

Residues 6–99 (PTLTVFPPST…EGNTVEKSLS (94 aa)) form the Ig-like domain. The cysteines at positions 27 and 85 are disulfide-linked.

In Rattus norvegicus (Rat), this protein is Ig lambda-2 chain C region.